The sequence spans 447 residues: Argininosuccinate lyase (447 aa).

This sequence belongs to the lyase 1 family. Argininosuccinate lyase subfamily.

Its subcellular location is the cytoplasm. It catalyses the reaction 2-(N(omega)-L-arginino)succinate = fumarate + L-arginine. The protein operates within amino-acid biosynthesis; L-arginine biosynthesis; L-arginine from L-ornithine and carbamoyl phosphate: step 3/3. The chain is Argininosuccinate lyase from Bacteroides fragilis (strain ATCC 25285 / DSM 2151 / CCUG 4856 / JCM 11019 / LMG 10263 / NCTC 9343 / Onslow / VPI 2553 / EN-2).